The sequence spans 158 residues: 2-C-methyl-D-erythritol 2,4-cyclodiphosphate synthase (158 aa).

A divalent metal cation contacts are provided by Asp-9 and His-11. 4-CDP-2-C-methyl-D-erythritol 2-phosphate-binding positions include 9–11 and 35–36; these read DVH and HS. Position 43 (His-43) interacts with a divalent metal cation. 4-CDP-2-C-methyl-D-erythritol 2-phosphate is bound by residues 57 to 59, 62 to 66, 101 to 107, 133 to 136, Phe-140, and Arg-143; these read DIG, FPDTD, AQKPKMA, and TTTE.

The protein belongs to the IspF family. Homotrimer. The cofactor is a divalent metal cation.

It catalyses the reaction 4-CDP-2-C-methyl-D-erythritol 2-phosphate = 2-C-methyl-D-erythritol 2,4-cyclic diphosphate + CMP. Its pathway is isoprenoid biosynthesis; isopentenyl diphosphate biosynthesis via DXP pathway; isopentenyl diphosphate from 1-deoxy-D-xylulose 5-phosphate: step 4/6. Involved in the biosynthesis of isopentenyl diphosphate (IPP) and dimethylallyl diphosphate (DMAPP), two major building blocks of isoprenoid compounds. Catalyzes the conversion of 4-diphosphocytidyl-2-C-methyl-D-erythritol 2-phosphate (CDP-ME2P) to 2-C-methyl-D-erythritol 2,4-cyclodiphosphate (ME-CPP) with a corresponding release of cytidine 5-monophosphate (CMP). This chain is 2-C-methyl-D-erythritol 2,4-cyclodiphosphate synthase, found in Bacillus cereus (strain B4264).